The following is a 320-amino-acid chain: Aspartate carbamoyltransferase catalytic subunit (320 aa).

Residues Arg-70 and Thr-71 each contribute to the carbamoyl phosphate site. Lys-98 is an L-aspartate binding site. 3 residues coordinate carbamoyl phosphate: Arg-120, His-149, and Gln-152. The L-aspartate site is built by Arg-182 and Arg-237. Carbamoyl phosphate-binding residues include Gly-278 and Pro-279.

This sequence belongs to the aspartate/ornithine carbamoyltransferase superfamily. ATCase family. In terms of assembly, heterododecamer (2C3:3R2) of six catalytic PyrB chains organized as two trimers (C3), and six regulatory PyrI chains organized as three dimers (R2).

The enzyme catalyses carbamoyl phosphate + L-aspartate = N-carbamoyl-L-aspartate + phosphate + H(+). It functions in the pathway pyrimidine metabolism; UMP biosynthesis via de novo pathway; (S)-dihydroorotate from bicarbonate: step 2/3. Catalyzes the condensation of carbamoyl phosphate and aspartate to form carbamoyl aspartate and inorganic phosphate, the committed step in the de novo pyrimidine nucleotide biosynthesis pathway. In Vesicomyosocius okutanii subsp. Calyptogena okutanii (strain HA), this protein is Aspartate carbamoyltransferase catalytic subunit.